Consider the following 205-residue polypeptide: Thymidylate kinase (205 aa).

10 to 17 (GTEGVGKS) provides a ligand contact to ATP.

The protein belongs to the thymidylate kinase family.

It carries out the reaction dTMP + ATP = dTDP + ADP. Functionally, phosphorylation of dTMP to form dTDP in both de novo and salvage pathways of dTTP synthesis. This Teredinibacter turnerae (strain ATCC 39867 / T7901) protein is Thymidylate kinase.